Consider the following 387-residue polypeptide: Beta-citrylglutamate synthase B (387 aa).

Residues 119–304 (FQELAGHGVP…VAGIIADYAA (186 aa)) enclose the ATP-grasp domain. ATP contacts are provided by residues Lys-158, 193–203 (QKYIKESHGRD), and Arg-219. Mg(2+)-binding residues include Asp-264, Glu-277, and Asn-279. Mn(2+) is bound by residues Asp-264, Glu-277, and Asn-279. The segment at 325 to 361 (ASETSEPELGPPASAAVDNMSASSSSVDSDPESTTER) is disordered. Low complexity predominate over residues 337-352 (ASAAVDNMSASSSSVD).

Belongs to the RimK family. The cofactor is Mg(2+). It depends on Mn(2+) as a cofactor. Strongly expressed in brain and testis. Expressed in eyes, thymus, lung, kidney, skeletal muscle, spleen, skin and heart. Expressed in neurons of the neocortex, the gray matter and Purkinje cells.

It localises to the cytoplasm. It carries out the reaction citrate + L-glutamate + ATP = beta-citrylglutamate + ADP + phosphate + H(+). The enzyme catalyses N-acetyl-L-aspartate + L-glutamate + ATP = N-acetyl-L-aspartyl-L-glutamate + ADP + phosphate + H(+). Functionally, catalyzes the synthesis of beta-citryl-L-glutamate and N-acetyl-L-aspartyl-L-glutamate. Beta-citryl-L-glutamate is synthesized more efficiently than N-acetyl-L-aspartyl-L-glutamate. In Mus musculus (Mouse), this protein is Beta-citrylglutamate synthase B (Rimklb).